A 484-amino-acid polypeptide reads, in one-letter code: Maintenance of mitochondrial morphology protein 1 (484 aa).

Over 1–22 (MSFQQSETVPVPAQSSLSFTQG) the chain is Lumenal. The chain crosses the membrane as a helical span at residues 23-43 (FLLGQLSVVLLIGAFIKFFIF). At 44 to 484 (GEAPPPPSRG…PGSLSGAAAR (441 aa)) the chain is on the cytoplasmic side. Disordered stretches follow at residues 50-98 (PSRG…SSST), 272-319 (STPP…TGSP), and 388-484 (RTGV…AAAR). Residues 54–64 (LSHRASTHRRS) are compositionally biased toward basic residues. 2 stretches are compositionally biased toward polar residues: residues 65–78 (NSIY…ANNR) and 85–98 (SNSN…SSST). One can recognise an SMP-LTD domain in the interval 130-380 (QPESLDWFNV…EPRVQVVGLP (251 aa)). Positions 272-286 (STPPLHTPSPSPSPP) are enriched in pro residues. Positions 399-408 (TGSNAASRSA) are enriched in polar residues. Residues 413 to 427 (LGDHHLGDREPEGLR) are compositionally biased toward basic and acidic residues. Polar residues-rich tracts occupy residues 437-449 (QFDS…SYNV) and 466-476 (GALSEQFQMPG).

It belongs to the MMM1 family. Homodimer. Component of the ER-mitochondria encounter structure (ERMES) or MDM complex, composed of mmm1, mdm10, mdm12 and mdm34. A mmm1 homodimer associates with one molecule of mdm12 on each side in a pairwise head-to-tail manner, and the SMP-LTD domains of mmm1 and mdm12 generate a continuous hydrophobic tunnel for phospholipid trafficking.

It is found in the endoplasmic reticulum membrane. Component of the ERMES/MDM complex, which serves as a molecular tether to connect the endoplasmic reticulum (ER) and mitochondria. Components of this complex are involved in the control of mitochondrial shape and protein biogenesis, and function in nonvesicular lipid trafficking between the ER and mitochondria. The mdm12-mmm1 subcomplex functions in the major beta-barrel assembly pathway that is responsible for biogenesis of all outer membrane beta-barrel proteins, and acts in a late step after the SAM complex. The mdm10-mdm12-mmm1 subcomplex further acts in the TOM40-specific pathway after the action of the mdm12-mmm1 complex. Essential for establishing and maintaining the structure of mitochondria and maintenance of mtDNA nucleoids. The sequence is that of Maintenance of mitochondrial morphology protein 1 from Aspergillus niger (strain ATCC MYA-4892 / CBS 513.88 / FGSC A1513).